A 255-amino-acid chain; its full sequence is Imidazole glycerol phosphate synthase subunit HisF (255 aa).

Active-site residues include Asp11 and Asp130.

The protein belongs to the HisA/HisF family. In terms of assembly, heterodimer of HisH and HisF.

Its subcellular location is the cytoplasm. The catalysed reaction is 5-[(5-phospho-1-deoxy-D-ribulos-1-ylimino)methylamino]-1-(5-phospho-beta-D-ribosyl)imidazole-4-carboxamide + L-glutamine = D-erythro-1-(imidazol-4-yl)glycerol 3-phosphate + 5-amino-1-(5-phospho-beta-D-ribosyl)imidazole-4-carboxamide + L-glutamate + H(+). It participates in amino-acid biosynthesis; L-histidine biosynthesis; L-histidine from 5-phospho-alpha-D-ribose 1-diphosphate: step 5/9. In terms of biological role, IGPS catalyzes the conversion of PRFAR and glutamine to IGP, AICAR and glutamate. The HisF subunit catalyzes the cyclization activity that produces IGP and AICAR from PRFAR using the ammonia provided by the HisH subunit. The chain is Imidazole glycerol phosphate synthase subunit HisF from Rhodopseudomonas palustris (strain BisA53).